Reading from the N-terminus, the 335-residue chain is Holliday junction branch migration complex subunit RuvB (335 aa).

Positions 4 to 184 (ADRLIDATEK…FGIVQRLEFY (181 aa)) are large ATPase domain (RuvB-L). Residues isoleucine 23, arginine 24, glycine 65, lysine 68, threonine 69, threonine 70, 131–133 (EDY), arginine 174, tyrosine 184, and arginine 221 each bind ATP. Threonine 69 serves as a coordination point for Mg(2+). Positions 185–255 (SVEDLSYIVG…VAELALNMID (71 aa)) are small ATPAse domain (RuvB-S). A head domain (RuvB-H) region spans residues 258–335 (KSGFDYMDRK…HHFGLLPKQD (78 aa)). The DNA site is built by arginine 313 and arginine 318.

It belongs to the RuvB family. In terms of assembly, homohexamer. Forms an RuvA(8)-RuvB(12)-Holliday junction (HJ) complex. HJ DNA is sandwiched between 2 RuvA tetramers; dsDNA enters through RuvA and exits via RuvB. An RuvB hexamer assembles on each DNA strand where it exits the tetramer. Each RuvB hexamer is contacted by two RuvA subunits (via domain III) on 2 adjacent RuvB subunits; this complex drives branch migration. In the full resolvosome a probable DNA-RuvA(4)-RuvB(12)-RuvC(2) complex forms which resolves the HJ.

It localises to the cytoplasm. The enzyme catalyses ATP + H2O = ADP + phosphate + H(+). In terms of biological role, the RuvA-RuvB-RuvC complex processes Holliday junction (HJ) DNA during genetic recombination and DNA repair, while the RuvA-RuvB complex plays an important role in the rescue of blocked DNA replication forks via replication fork reversal (RFR). RuvA specifically binds to HJ cruciform DNA, conferring on it an open structure. The RuvB hexamer acts as an ATP-dependent pump, pulling dsDNA into and through the RuvAB complex. RuvB forms 2 homohexamers on either side of HJ DNA bound by 1 or 2 RuvA tetramers; 4 subunits per hexamer contact DNA at a time. Coordinated motions by a converter formed by DNA-disengaged RuvB subunits stimulates ATP hydrolysis and nucleotide exchange. Immobilization of the converter enables RuvB to convert the ATP-contained energy into a lever motion, pulling 2 nucleotides of DNA out of the RuvA tetramer per ATP hydrolyzed, thus driving DNA branch migration. The RuvB motors rotate together with the DNA substrate, which together with the progressing nucleotide cycle form the mechanistic basis for DNA recombination by continuous HJ branch migration. Branch migration allows RuvC to scan DNA until it finds its consensus sequence, where it cleaves and resolves cruciform DNA. The sequence is that of Holliday junction branch migration complex subunit RuvB from Pseudoalteromonas translucida (strain TAC 125).